Reading from the N-terminus, the 113-residue chain is Small ribosomal subunit protein eS24 (113 aa).

This sequence belongs to the eukaryotic ribosomal protein eS24 family.

The protein is Small ribosomal subunit protein eS24 of Metallosphaera sedula (strain ATCC 51363 / DSM 5348 / JCM 9185 / NBRC 15509 / TH2).